The chain runs to 205 residues: Urease accessory protein UreG (205 aa).

14–21 (GPVGSGKT) lines the GTP pocket.

The protein belongs to the SIMIBI class G3E GTPase family. UreG subfamily. In terms of assembly, homodimer. UreD, UreF and UreG form a complex that acts as a GTP-hydrolysis-dependent molecular chaperone, activating the urease apoprotein by helping to assemble the nickel containing metallocenter of UreC. The UreE protein probably delivers the nickel.

The protein resides in the cytoplasm. Functionally, facilitates the functional incorporation of the urease nickel metallocenter. This process requires GTP hydrolysis, probably effectuated by UreG. The polypeptide is Urease accessory protein UreG (Escherichia coli).